The chain runs to 333 residues: MIITDTPIDTLAGSILDGASISSEQALALTALSGASLQSLFAAASRVREHHFGNQVSLCGIINAKSGLCPEDCAFCAQSSHHATGVACYPLLDQDTLLAGARSVAGHGAACYGIVTSGSGISEGDELEQVCAAIRAIRAEGRIAPGASLGTLTKTAAEQLKAAGLVTYHHNLETSRSFFPQICSTHDYDDDVATVQLAKQVGLRVCCGGLFGLGETMAQRVELALTLRELQVDSVPINFLDPVPGTPLAVMQQLTSLDCLHTIALYRLILPDVHITICGGRQRNLRELQSWVFLAGASGIMTGNYLTKEGRQPADDLRMIEDLGLVIAKEMLR.

One can recognise a Radical SAM core domain in the interval 51–281; it reads HFGNQVSLCG…DVHITICGGR (231 aa). C69, C73, and C76 together coordinate [4Fe-4S] cluster. C206 lines the [2Fe-2S] cluster pocket.

The protein belongs to the radical SAM superfamily. Biotin synthase family. As to quaternary structure, homodimer. [4Fe-4S] cluster serves as cofactor. Requires [2Fe-2S] cluster as cofactor.

The enzyme catalyses (4R,5S)-dethiobiotin + (sulfur carrier)-SH + 2 reduced [2Fe-2S]-[ferredoxin] + 2 S-adenosyl-L-methionine = (sulfur carrier)-H + biotin + 2 5'-deoxyadenosine + 2 L-methionine + 2 oxidized [2Fe-2S]-[ferredoxin]. It participates in cofactor biosynthesis; biotin biosynthesis; biotin from 7,8-diaminononanoate: step 2/2. Catalyzes the conversion of dethiobiotin (DTB) to biotin by the insertion of a sulfur atom into dethiobiotin via a radical-based mechanism. The sequence is that of Biotin synthase from Trichlorobacter lovleyi (strain ATCC BAA-1151 / DSM 17278 / SZ) (Geobacter lovleyi).